The chain runs to 361 residues: Heme A synthase (361 aa).

Transmembrane regions (helical) follow at residues Leu22–Gly42, Leu109–Gly129, Leu139–Ser159, His175–Pro195, Phe208–Gly228, Phe269–Thr289, Val303–Val323, and Val324–Thr344. Residue His271 coordinates heme. A heme-binding site is contributed by His332.

This sequence belongs to the COX15/CtaA family. Type 2 subfamily. As to quaternary structure, interacts with CtaB. It depends on heme b as a cofactor.

The protein localises to the cell membrane. It catalyses the reaction Fe(II)-heme o + 2 A + H2O = Fe(II)-heme a + 2 AH2. Its pathway is porphyrin-containing compound metabolism; heme A biosynthesis; heme A from heme O: step 1/1. In terms of biological role, catalyzes the conversion of heme O to heme A by two successive hydroxylations of the methyl group at C8. The first hydroxylation forms heme I, the second hydroxylation results in an unstable dihydroxymethyl group, which spontaneously dehydrates, resulting in the formyl group of heme A. This is Heme A synthase from Chelativorans sp. (strain BNC1).